The sequence spans 272 residues: Putative phosphatase HI_0597 (272 aa).

D11 functions as the Nucleophile in the catalytic mechanism. D11 is a Mg(2+) binding site. Residue L12 participates in phosphate binding. Residue D13 coordinates Mg(2+). Residues 45–46 (TG) and K195 contribute to the phosphate site. D218 is a Mg(2+) binding site. A phosphate-binding site is contributed by N221.

The protein belongs to the HAD-like hydrolase superfamily. Cof family. Mg(2+) serves as cofactor.

The chain is Putative phosphatase HI_0597 from Haemophilus influenzae (strain ATCC 51907 / DSM 11121 / KW20 / Rd).